The sequence spans 134 residues: Cytochrome b5 (134 aa).

Ala2 carries the N-acetylalanine modification. N6-acetyllysine is present on residues Lys7, Lys10, and Lys19. The region spanning 9–85 is the Cytochrome b5 heme-binding domain; sequence VKYYTLEEIQ…SKTYIIGELH (77 aa). Residues His44 and His68 each coordinate heme. A helical transmembrane segment spans residues 109–131; it reads WWTNWVIPAISALVVALMYRLYM.

This sequence belongs to the cytochrome b5 family.

It is found in the endoplasmic reticulum membrane. Its subcellular location is the microsome membrane. Cytochrome b5 is a membrane-bound hemoprotein functioning as an electron carrier for several membrane-bound oxygenases. It is also involved in several steps of the sterol biosynthesis pathway, particularly in the C-6 double bond introduction during the C-6 desaturation. In Rattus norvegicus (Rat), this protein is Cytochrome b5 (Cyb5a).